Consider the following 446-residue polypeptide: FAD-dependent monooxygenase eupB (446 aa).

Residues 10-30 (EPHIAIVGGGIVGVILTLGLL) form a helical membrane-spanning segment. An N-linked (GlcNAc...) asparagine glycan is attached at asparagine 33. FAD-binding residues include glutamate 40, alanine 53, and arginine 125. Residues arginine 206 and tyrosine 239 contribute to the active site. Asparagine 243 carries N-linked (GlcNAc...) asparagine glycosylation. FAD-binding residues include aspartate 322 and alanine 335. N-linked (GlcNAc...) asparagine glycosylation occurs at asparagine 395.

The protein belongs to the paxM FAD-dependent monooxygenase family. The cofactor is FAD.

The protein localises to the membrane. It participates in secondary metabolite biosynthesis; terpenoid biosynthesis. FAD-dependent monooxygenase; part of the gene cluster that mediates the biosynthesis of eupenifeldin, a bistropolone meroterpenoid that acts as an antitumor agent. The first step of eupenifeldin biosynthesis is the biosynthesis of 3-methylorcinaldehyde performed by the non-reducing polyketide synthase eupA. Oxidative dearomatization of 3-methylorcinaldehyde likely catalyzed by the FAD-dependent monooxygenase eupB is followed by oxidative ring expansion by the 2-oxoglutarate-dependent dioxygenase eupC to provide the first tropolone metabolite, tropolone stipitaldehyde. In parallel, generation of sesquiterpene alpha-humulene from farnesylpyrophosphate (FPP) is catalyzed by the terpene cyclase eupE. The cytochrome P450 monooxygenase eupD then hydroxylates humulene to humulenol. The putative Diels-Alderase eupF probably catalyzes the formation of the tropolone-humulene skeleton by linking humulenol and the polyketide moiety. The short-chain dehydrogenase/reductase eupG and the flavin-dependent monooxygenase eupH are also essential for eupenifeldin biosynthesis and are likely the additional decorating enzymes of the tropolone-humulene skeleton to produce final eupenifeldin or derivatives. This is FAD-dependent monooxygenase eupB from Phoma sp.